Here is a 460-residue protein sequence, read N- to C-terminus: tRNA(Ile)-lysidine synthase (460 aa).

Ser-30–Ser-35 contributes to the ATP binding site.

This sequence belongs to the tRNA(Ile)-lysidine synthase family.

Its subcellular location is the cytoplasm. The enzyme catalyses cytidine(34) in tRNA(Ile2) + L-lysine + ATP = lysidine(34) in tRNA(Ile2) + AMP + diphosphate + H(+). Functionally, ligates lysine onto the cytidine present at position 34 of the AUA codon-specific tRNA(Ile) that contains the anticodon CAU, in an ATP-dependent manner. Cytidine is converted to lysidine, thus changing the amino acid specificity of the tRNA from methionine to isoleucine. This Yersinia pseudotuberculosis serotype I (strain IP32953) protein is tRNA(Ile)-lysidine synthase.